We begin with the raw amino-acid sequence, 505 residues long: ATP synthase subunit alpha (505 aa).

170 to 177 (GDRQTGKS) is an ATP binding site.

The protein belongs to the ATPase alpha/beta chains family. In terms of assembly, F-type ATPases have 2 components, CF(1) - the catalytic core - and CF(0) - the membrane proton channel. CF(1) has five subunits: alpha(3), beta(3), gamma(1), delta(1), epsilon(1). CF(0) has four main subunits: a(1), b(1), b'(1) and c(9-12).

The protein resides in the cellular thylakoid membrane. It carries out the reaction ATP + H2O + 4 H(+)(in) = ADP + phosphate + 5 H(+)(out). Produces ATP from ADP in the presence of a proton gradient across the membrane. The alpha chain is a regulatory subunit. In Prochlorococcus marinus (strain AS9601), this protein is ATP synthase subunit alpha.